The primary structure comprises 368 residues: Glutamate 5-kinase (368 aa).

Lysine 13 provides a ligand contact to ATP. Substrate contacts are provided by serine 54, aspartate 141, and asparagine 153. 173–174 is a binding site for ATP; that stretch reads SD. Positions 278 to 355 constitute a PUA domain; sequence KGSLRLDAGA…DEIPEILGYP (78 aa).

It belongs to the glutamate 5-kinase family.

The protein resides in the cytoplasm. It catalyses the reaction L-glutamate + ATP = L-glutamyl 5-phosphate + ADP. Its pathway is amino-acid biosynthesis; L-proline biosynthesis; L-glutamate 5-semialdehyde from L-glutamate: step 1/2. Its function is as follows. Catalyzes the transfer of a phosphate group to glutamate to form L-glutamate 5-phosphate. The protein is Glutamate 5-kinase of Jannaschia sp. (strain CCS1).